The primary structure comprises 117 residues: V-type sodium ATPase subunit F (117 aa).

The interval 1-20 (MARILTRIKEAEENNQKKEE) is disordered. Residues 7–20 (RIKEAEENNQKKEE) show a composition bias toward basic and acidic residues.

Belongs to the V-ATPase G subunit family.

In terms of biological role, involved in ATP-driven sodium extrusion. In Enterococcus hirae (strain ATCC 9790 / DSM 20160 / JCM 8729 / LMG 6399 / NBRC 3181 / NCIMB 6459 / NCDO 1258 / NCTC 12367 / WDCM 00089 / R), this protein is V-type sodium ATPase subunit F (ntpF).